The chain runs to 211 residues: tRNA (guanine-N(7)-)-methyltransferase (211 aa).

The S-adenosyl-L-methionine site is built by E43, D68, N95, and N117. K121 provides a ligand contact to substrate. Residues 123-128 form an interaction with RNA region; the sequence is RHNKRR. Residues D153 and 190-193 each bind substrate; that span reads TEYE.

The protein belongs to the class I-like SAM-binding methyltransferase superfamily. TrmB family.

The enzyme catalyses guanosine(46) in tRNA + S-adenosyl-L-methionine = N(7)-methylguanosine(46) in tRNA + S-adenosyl-L-homocysteine. It functions in the pathway tRNA modification; N(7)-methylguanine-tRNA biosynthesis. In terms of biological role, catalyzes the formation of N(7)-methylguanine at position 46 (m7G46) in tRNA. The sequence is that of tRNA (guanine-N(7)-)-methyltransferase from Clostridium tetani (strain Massachusetts / E88).